The following is a 60-amino-acid chain: Mastoparan-D (60 aa).

The N-terminal stretch at 1–27 (MKNTILILFTAFIALLGFFGMSAEALA) is a signal peptide. AXPX repeat units follow at residues 27-30 (ADPI), 31-34 (ADPV), 35-38 (AGPN), and 41-44 (ADPE). A propeptide spanning residues 28 to 45 (DPIADPVAGPNPEADPEA) is cleaved from the precursor. Leu59 bears the Leucine amide mark.

This sequence belongs to the MCD family. Mastoparan subfamily. In terms of tissue distribution, expressed by the venom gland.

It localises to the secreted. Its subcellular location is the target cell membrane. In terms of biological role, antimicrobial and mast cell degranulating peptide. Has broad spectrum antibacterial activity against both Gram-positive and Gram-negative bacteria (S.aureus MIC=24-32 ug/ml, S.xylosus MIC=2 ug/ml, S.alactolyticus MIC=16 ug/ml, C.koseri MIC=4 ug/ml, E.coli MIC=8 ug/ml, K.pneumoniae MIC=32 ug/ml, P.aerugiosa MIC=128 ug/ml, S.choleraesuis MIC=16 ug/ml, S.typhimurium MIC=32 ug/ml, V.parahamelytics MIC=32 ug/ml). Affects membrane permeability of E.coli. Shows hemolytic activities on sheep, chicken and human erythrocytes. Its mast cell degranulation activity may be related to the activation of G-protein coupled receptors in mast cells as well as interaction with other proteins located in cell endosomal membranes in the mast cells. The chain is Mastoparan-D from Vespa ducalis (Black-tailed hornet).